Reading from the N-terminus, the 626-residue chain is Chaperone protein HtpG (626 aa).

The a; substrate-binding stretch occupies residues 1–341 (MRKKKFKAES…SEDLSLNISR (341 aa)). Residues 342–552 (EMLQHDRQLK…DGEVTIEMEK (211 aa)) are b. Residues 553–626 (VLNAMPDSQQ…FTNDICKVMV (74 aa)) are c.

This sequence belongs to the heat shock protein 90 family. As to quaternary structure, homodimer.

It is found in the cytoplasm. Molecular chaperone. Has ATPase activity. This chain is Chaperone protein HtpG, found in Bacillus velezensis (strain DSM 23117 / BGSC 10A6 / LMG 26770 / FZB42) (Bacillus amyloliquefaciens subsp. plantarum).